We begin with the raw amino-acid sequence, 288 residues long: Sulfhydrogenase 2 subunit gamma (288 aa).

Residues 4-103 (YRSYDARIIE…RGPYGNGFPM (100 aa)) enclose the FAD-binding FR-type domain. [2Fe-2S] cluster contacts are provided by Cys-250, Cys-255, Cys-258, and Cys-270.

As to quaternary structure, dimer of heterotetramer of alpha, beta, gamma and delta subunits. The nickel-containing alpha and delta subunits constitute the hydrogenase activity. The beta and gamma subunits (flavin-containing dimer) constitute the sulfur reductase activity. Requires FAD as cofactor. [2Fe-2S] cluster is required as a cofactor.

The protein resides in the cytoplasm. It catalyses the reaction n sulfur + H2 = (n-1) sulfur + hydrogen sulfide + H(+). Its function is as follows. Part of a bifunctional enzyme complex that functions as a hydrogen-evolving hydrogenase with sulfur-reducing activity. May play a role in hydrogen cycling during fermentative growth. Activity exhibited with NAD in addition to NADPH. The beta and gamma subunits form the sulfur-reducing component that catalyzes the cytoplasmic production of hydrogen sulfide in the presence of elemental sulfur. This chain is Sulfhydrogenase 2 subunit gamma, found in Pyrococcus furiosus (strain ATCC 43587 / DSM 3638 / JCM 8422 / Vc1).